The primary structure comprises 392 residues: Protein Wnt-1 (392 aa).

The first 16 residues, 1–16, serve as a signal peptide directing secretion; the sequence is MKCLWLLVITVLCLRC. 11 cysteine pairs are disulfide-bonded: Cys-89-Cys-100, Cys-142-Cys-150, Cys-152-Cys-179, Cys-227-Cys-241, Cys-229-Cys-236, Cys-321-Cys-352, Cys-337-Cys-347, Cys-351-Cys-391, Cys-367-Cys-382, Cys-369-Cys-379, and Cys-374-Cys-375. N-linked (GlcNAc...) asparagine glycosylation occurs at Asn-99. Ser-233 is lipidated: O-palmitoleoyl serine; by PORCN. N-linked (GlcNAc...) asparagine glycans are attached at residues Asn-338 and Asn-368.

Belongs to the Wnt family. Palmitoleoylated by porcupine. The lipid group functions as a sorting signal, targeting the ligand to polarized vesicles that transport WNT-1 to unique sites at the cell surface. Depalmitoleoylated by notum, leading to inhibit Wnt signaling pathway.

The protein localises to the secreted. It is found in the extracellular space. Its subcellular location is the extracellular matrix. In terms of biological role, ligand for members of the frizzled family of seven transmembrane receptors. Probable developmental protein. This is Protein Wnt-1 (WNT-1) from Bombyx mori (Silk moth).